The following is a 506-amino-acid chain: Probable cytosol aminopeptidase (506 aa).

Mn(2+) is bound by residues K270 and D275. K282 is an active-site residue. Residues D293, D352, and E354 each contribute to the Mn(2+) site. The active site involves R356.

The protein belongs to the peptidase M17 family. Mn(2+) is required as a cofactor.

The protein localises to the cytoplasm. It carries out the reaction Release of an N-terminal amino acid, Xaa-|-Yaa-, in which Xaa is preferably Leu, but may be other amino acids including Pro although not Arg or Lys, and Yaa may be Pro. Amino acid amides and methyl esters are also readily hydrolyzed, but rates on arylamides are exceedingly low.. The enzyme catalyses Release of an N-terminal amino acid, preferentially leucine, but not glutamic or aspartic acids.. Functionally, presumably involved in the processing and regular turnover of intracellular proteins. Catalyzes the removal of unsubstituted N-terminal amino acids from various peptides. In Photorhabdus laumondii subsp. laumondii (strain DSM 15139 / CIP 105565 / TT01) (Photorhabdus luminescens subsp. laumondii), this protein is Probable cytosol aminopeptidase.